A 35-amino-acid chain; its full sequence is MLVVIMFFIAFVFCSWLSYSYLCPYISTKELNKSR.

The chain crosses the membrane as a helical span at residues 2 to 22 (LVVIMFFIAFVFCSWLSYSYL). Residues 23 to 35 (CPYISTKELNKSR) lie on the Virion surface side of the membrane.

It belongs to the orthopoxvirus OPG076 family. Component of the entry fusion complex (EFC) composed of OPG053, OPG076, OPG086, OPG094, OPG095, OPG099, OPG107, OPG143, OPG104, OPG147 and OPG155. Except for OPG095 and OPG053, each of the EFC proteins is required for assembly or stability of the complex. Unglycosylated because produced in viral factories instead of the classic ER -Golgi route.

The protein localises to the virion membrane. In terms of biological role, component of the entry fusion complex (EFC), which consists of 11 proteins. During cell infection, this complex mediates entry of the virion core into the host cytoplasm by a two-step mechanism consisting of lipid mixing of the viral and cellular membranes and subsequent pore formation. This chain is Entry-fusion complex protein OPG076 (OPG076), found in Cynomys gunnisoni (Gunnison's prairie dog).